Consider the following 1221-residue polypeptide: DNA-directed RNA polymerase subunit beta' (1221 aa).

Positions 60, 62, 75, and 78 each coordinate Zn(2+). Residues Asp449, Asp451, and Asp453 each contribute to the Mg(2+) site. Zn(2+)-binding residues include Cys821, Cys896, Cys903, and Cys906.

Belongs to the RNA polymerase beta' chain family. As to quaternary structure, the RNAP catalytic core consists of 2 alpha, 1 beta, 1 beta' and 1 omega subunit. When a sigma factor is associated with the core the holoenzyme is formed, which can initiate transcription. The cofactor is Mg(2+). Zn(2+) is required as a cofactor.

It carries out the reaction RNA(n) + a ribonucleoside 5'-triphosphate = RNA(n+1) + diphosphate. DNA-dependent RNA polymerase catalyzes the transcription of DNA into RNA using the four ribonucleoside triphosphates as substrates. The chain is DNA-directed RNA polymerase subunit beta' from Lactobacillus delbrueckii subsp. bulgaricus (strain ATCC 11842 / DSM 20081 / BCRC 10696 / JCM 1002 / NBRC 13953 / NCIMB 11778 / NCTC 12712 / WDCM 00102 / Lb 14).